We begin with the raw amino-acid sequence, 1755 residues long: Transposon Ty1-BL Gag-Pol polyprotein (1755 aa).

Polar residues-rich tracts occupy residues 20–31 (SVTSKEVQTTQD), 46–55 (VSTQANSQQP), and 137–168 (VGTHLNTPSPESGNSFPDSSSAKSNMTSTNQH). Disordered regions lie at residues 20–84 (SVTS…QNGP), 137–173 (VGTHLNTPSPESGNSFPDSSSAKSNMTSTNQHVRPPP), and 350–420 (QQES…IRGS). Positions 299 to 401 (NNGIPINNKV…NSQSRTARAH (103 aa)) are RNA-binding. Positions 363-372 (SPSDEKKDSR) are enriched in basic and acidic residues. The span at 373–411 (TYTNTTKPKSITRNSQKPNNSQSRTARAHNVSTFNNSPG) shows a compositional bias: polar residues. Asp-461 functions as the For protease activity; shared with dimeric partner in the catalytic mechanism. Positions 583-640 (NVHTSESTRKYPYPFIHRMLAHANAQTIRYSLKNNTITYFNESDVDWSSAIDYQCPDC) are integrase-type zinc finger-like. The 176-residue stretch at 660–835 (NSYEPFQYLH…AGLDISTLLP (176 aa)) folds into the Integrase catalytic domain. Mg(2+) contacts are provided by Asp-671 and Asp-736. A disordered region spans residues 956-1172 (SKAVSPTDST…LGGIGDSNAY (217 aa)). A compositionally biased stretch (low complexity) spans 960–969 (SPTDSTPPST). Polar residues-rich tracts occupy residues 1005-1017 (STPQISDIESTDS) and 1031-1043 (MSQSNTHESSYAS). A compositionally biased stretch (basic and acidic residues) spans 1044-1053 (KSKDFRHSDS). 2 stretches are compositionally biased toward polar residues: residues 1054–1082 (YSDNETNHTNVPISSTGGTNNKTVPQTSE) and 1095–1106 (SIDTSSSESNSL). The Bipartite nuclear localization signal signature appears at 1178-1212 (KKRSLEDNETEIKVSRDTWNTKNMRSLEPPRSKKR). The region spanning 1338–1476 (NNYHITQLDI…DILGLEIKYQ (139 aa)) is the Reverse transcriptase Ty1/copia-type domain. Mg(2+)-binding residues include Asp-1346, Asp-1427, Asp-1428, Asp-1610, Glu-1652, and Asp-1685. Positions 1610–1752 (DASYGNQPYY…IKTFKLLTNK (143 aa)) constitute an RNase H Ty1/copia-type domain.

In terms of assembly, the capsid protein forms a homotrimer, from which the VLPs are assembled. The protease is a homodimer, whose active site consists of two apposed aspartic acid residues. In terms of processing, initially, virus-like particles (VLPs) are composed of the structural unprocessed proteins Gag and Gag-Pol, and also contain the host initiator methionine tRNA (tRNA(i)-Met) which serves as a primer for minus-strand DNA synthesis, and a dimer of genomic Ty RNA. Processing of the polyproteins occurs within the particle and proceeds by an ordered pathway, called maturation. First, the protease (PR) is released by autocatalytic cleavage of the Gag-Pol polyprotein yielding capsid protein p45 and a Pol-p154 precursor protein. This cleavage is a prerequisite for subsequent processing of Pol-p154 at the remaining sites to release the mature structural and catalytic proteins. Maturation takes place prior to the RT reaction and is required to produce transposition-competent VLPs.

Its subcellular location is the cytoplasm. It is found in the nucleus. It carries out the reaction DNA(n) + a 2'-deoxyribonucleoside 5'-triphosphate = DNA(n+1) + diphosphate. It catalyses the reaction Endonucleolytic cleavage to 5'-phosphomonoester.. Functionally, capsid protein (CA) is the structural component of the virus-like particle (VLP), forming the shell that encapsulates the retrotransposons dimeric RNA genome. The particles are assembled from trimer-clustered units and there are holes in the capsid shells that allow for the diffusion of macromolecules. CA also has nucleocapsid-like chaperone activity, promoting primer tRNA(i)-Met annealing to the multipartite primer-binding site (PBS), dimerization of Ty1 RNA and initiation of reverse transcription. The aspartyl protease (PR) mediates the proteolytic cleavages of the Gag and Gag-Pol polyproteins after assembly of the VLP. Its function is as follows. Reverse transcriptase/ribonuclease H (RT) is a multifunctional enzyme that catalyzes the conversion of the retro-elements RNA genome into dsDNA within the VLP. The enzyme displays a DNA polymerase activity that can copy either DNA or RNA templates, and a ribonuclease H (RNase H) activity that cleaves the RNA strand of RNA-DNA heteroduplexes during plus-strand synthesis and hydrolyzes RNA primers. The conversion leads to a linear dsDNA copy of the retrotransposon that includes long terminal repeats (LTRs) at both ends. In terms of biological role, integrase (IN) targets the VLP to the nucleus, where a subparticle preintegration complex (PIC) containing at least integrase and the newly synthesized dsDNA copy of the retrotransposon must transit the nuclear membrane. Once in the nucleus, integrase performs the integration of the dsDNA into the host genome. The polypeptide is Transposon Ty1-BL Gag-Pol polyprotein (TY1B-BL) (Saccharomyces cerevisiae (strain ATCC 204508 / S288c) (Baker's yeast)).